Reading from the N-terminus, the 305-residue chain is Beta-lactamase (305 aa).

A signal peptide (tat-type signal) is located at residues 1 to 34 (MGTTGARPSRRAVLTAAAGAAVAGIPLGGSTAFA). Serine 82 acts as the Acyl-ester intermediate in catalysis. 250-252 (KTG) serves as a coordination point for substrate.

The protein belongs to the class-A beta-lactamase family. In terms of processing, predicted to be exported by the Tat system. The position of the signal peptide cleavage has not been experimentally proven.

The catalysed reaction is a beta-lactam + H2O = a substituted beta-amino acid. This chain is Beta-lactamase, found in Streptomyces lavendulae.